The chain runs to 265 residues: Transmembrane protein 270 (265 aa).

The next 3 membrane-spanning stretches (helical) occupy residues 72 to 92 (PLGQ…WLVL), 130 to 150 (LFLS…VVTW), and 185 to 205 (LYWW…YLIT). The segment at 229–265 (QEVEPQEVSGSSLLPSLSASSDSESGTVLPEQETPRE) is disordered. Low complexity predominate over residues 237-253 (SGSSLLPSLSASSDSES).

Its subcellular location is the membrane. This is Transmembrane protein 270 from Homo sapiens (Human).